The chain runs to 245 residues: rRNA adenine N-6-methyltransferase (245 aa).

S-adenosyl-L-methionine-binding residues include N10, L12, G37, E58, D83, and N100.

The protein belongs to the class I-like SAM-binding methyltransferase superfamily. rRNA adenine N(6)-methyltransferase family.

It carries out the reaction adenosine(2085) in 23S rRNA + 2 S-adenosyl-L-methionine = N(6)-dimethyladenosine(2085) in 23S rRNA + 2 S-adenosyl-L-homocysteine + 2 H(+). This protein produces a dimethylation of the adenine residue at position 2085 in 23S rRNA, resulting in reduced affinity between ribosomes and macrolide-lincosamide-streptogramin B antibiotics. This is rRNA adenine N-6-methyltransferase (ermB) from Enterococcus faecalis (strain ATCC 700802 / V583).